The following is a 329-amino-acid chain: Phospho-N-acetylmuramoyl-pentapeptide-transferase (329 aa).

Helical transmembrane passes span 1-21 (MLLNGIVAAVITMIITIIGIP), 53-73 (MGGFVFVVVSLVVSLVAALVF), 76-96 (FSPAFITAWWVFAMYAVIGFL), 109-129 (GLTAKQKMLAQILIGIVSYFI), 141-161 (ILSWQVNIGIFFSIFIIIWLV), 175-195 (GLASITVAISLTAYAVIAVVH), 198-218 (YDVLLIILSVIGGLLGFFVFN), 237-257 (FLAIVSILLHAEWTLLLIGAV), and 309-329 (IVFWLFTAVLSVIALCIYFAF).

It belongs to the glycosyltransferase 4 family. MraY subfamily. The cofactor is Mg(2+).

It is found in the cell membrane. It catalyses the reaction UDP-N-acetyl-alpha-D-muramoyl-L-alanyl-gamma-D-glutamyl-L-lysyl-D-alanyl-D-alanine + di-trans,octa-cis-undecaprenyl phosphate = Mur2Ac(oyl-L-Ala-gamma-D-Glu-L-Lys-D-Ala-D-Ala)-di-trans,octa-cis-undecaprenyl diphosphate + UMP. It participates in cell wall biogenesis; peptidoglycan biosynthesis. Functionally, catalyzes the initial step of the lipid cycle reactions in the biosynthesis of the cell wall peptidoglycan: transfers peptidoglycan precursor phospho-MurNAc-pentapeptide from UDP-MurNAc-pentapeptide onto the lipid carrier undecaprenyl phosphate, yielding undecaprenyl-pyrophosphoryl-MurNAc-pentapeptide, known as lipid I. In Lactococcus lactis subsp. cremoris (strain MG1363), this protein is Phospho-N-acetylmuramoyl-pentapeptide-transferase.